We begin with the raw amino-acid sequence, 308 residues long: MKFLWAALVVTLLAGCQADVEEEVKLGQEPDRWQAKQPWEQALGRFWEYLRWVQTLSNKVKEELLNSQVTEELKLLIEETMKEVKAYKEELEKQVGPIAQETQARLSKELQAAQARLESDMEDVRTRLAQYRSEAQAALGQNTDDLQGRLASHLRKLRKRLLRDAEDLQKRLAVYQAGTHEAAERGVSAIHERLGPLMMEGPLQAIPPSQQLRERAEAWGQKVRGRLESVGSQARDRLDDVRDQMEELKAKVEEQASQVRLQAEAFQTRLKSWFEPLVQDMQRQWASLVEKVQSSLGISPSTKPSKTK.

Positions 1–18 (MKFLWAALVVTLLAGCQA) are cleaved as a signal peptide. 8 tandem repeats follow at residues 75-96 (LLIE…KQVG), 97-118 (PIAQ…ARLE), 119-140 (SDME…AALG), 141-162 (QNTD…KRLL), 163-184 (RDAE…EAAE), 185-206 (RGVS…LQAI), 207-224 (PPSQ…QKVR), and 225-246 (GRLE…DQME). The 8 X 22 AA approximate tandem repeats stretch occupies residues 75 to 246 (LLIEETMKEV…RLDDVRDQME (172 aa)). The segment at 153 to 163 (HLRKLRKRLLR) is LDL and other lipoprotein receptors binding. A heparin-binding site is contributed by 157–160 (LRKR). The lipid-binding and lipoprotein association stretch occupies residues 205–281 (AIPPSQQLRE…SWFEPLVQDM (77 aa)). Residue 220–227 (GQKVRGRL) coordinates heparin. Residues 257–308 (SQVRLQAEAFQTRLKSWFEPLVQDMQRQWASLVEKVQSSLGISPSTKPSKTK) are homooligomerization. Residues 269–281 (RLKSWFEPLVQDM) form a specificity for association with VLDL region.

This sequence belongs to the apolipoprotein A1/A4/E family. As to quaternary structure, homotetramer. May interact with ABCA1; functionally associated with ABCA1 in the biogenesis of HDLs. May interact with APP/A4 amyloid-beta peptide; the interaction is extremely stable in vitro but its physiological significance is unclear. May interact with MAPT. May interact with MAP2. In the cerebrospinal fluid, interacts with secreted SORL1. Interacts with PMEL; this allows the loading of PMEL luminal fragment on ILVs to induce fibril nucleation. In terms of processing, APOE exists as multiple glycosylated and sialylated glycoforms within cells and in plasma. The extent of glycosylation and sialylation are tissue and context specific. Glycated in plasma VLDL. Post-translationally, phosphorylated by FAM20C in the extracellular medium.

The protein resides in the secreted. The protein localises to the extracellular space. It localises to the extracellular matrix. Its subcellular location is the extracellular vesicle. It is found in the endosome. The protein resides in the multivesicular body. Functionally, APOE is an apolipoprotein, a protein associating with lipid particles, that mainly functions in lipoprotein-mediated lipid transport between organs via the plasma and interstitial fluids. APOE is a core component of plasma lipoproteins and is involved in their production, conversion and clearance. Apolipoproteins are amphipathic molecules that interact both with lipids of the lipoprotein particle core and the aqueous environment of the plasma. As such, APOE associates with chylomicrons, chylomicron remnants, very low density lipoproteins (VLDL) and intermediate density lipoproteins (IDL) but shows a preferential binding to high-density lipoproteins (HDL). It also binds a wide range of cellular receptors including the LDL receptor/LDLR and the very low-density lipoprotein receptor/VLDLR that mediate the cellular uptake of the APOE-containing lipoprotein particles. Finally, APOE also has a heparin-binding activity and binds heparan-sulfate proteoglycans on the surface of cells, a property that supports the capture and the receptor-mediated uptake of APOE-containing lipoproteins by cells. The chain is Apolipoprotein E (APOE) from Pteropus alecto (Black flying fox).